An 878-amino-acid chain; its full sequence is Probable di- and tripeptidase DUG2 (878 aa).

5 WD repeats span residues 18 to 57 (NHAFSILSIVAFPKKRLLFAGSQDSKILVFDLPTYNLIHT), 68 to 107 (HTRSSVLCLTGSEDENFLFSGGADSLVRIWSIGEKTIRDD), 235 to 274 (RFNQLLEKSSRTSGAEHIISSAGDGISKLWEFSKDKGQNT), 282 to 322 (DKID…IIST), and 362 to 405 (PQQG…SAVP). A Zn(2+)-binding site is contributed by His-520. Residue Asp-522 is part of the active site. Asp-553 is a Zn(2+) binding site. The active-site Proton acceptor is Glu-586. Position 587 (Glu-587) interacts with Zn(2+). Residues 608–651 (IDWILLSNSTWVDQEHPCLNYGLRGVINAQIKVWSDKPDGHSGL) form a WD 6 repeat. His-853 contributes to the Zn(2+) binding site.

It belongs to the peptidase M20A family. As to quaternary structure, component of the GSH degradosomal complex composed of at least DUG1, DUG2 and DUG3. Requires Zn(2+) as cofactor.

It is found in the cytoplasm. The protein localises to the nucleus. Component of the GSH degradosomal complex involved in the degradation of glutathione (GSH) and other peptides containing a gamma-glu-X bond. This Saccharomyces cerevisiae (strain ATCC 204508 / S288c) (Baker's yeast) protein is Probable di- and tripeptidase DUG2 (DUG2).